Reading from the N-terminus, the 252-residue chain is Hydroxyacylglutathione hydrolase (252 aa).

Residues histidine 52, histidine 54, aspartate 56, histidine 57, histidine 107, aspartate 128, and histidine 166 each contribute to the Zn(2+) site.

Belongs to the metallo-beta-lactamase superfamily. Glyoxalase II family. In terms of assembly, monomer. It depends on Zn(2+) as a cofactor.

It catalyses the reaction an S-(2-hydroxyacyl)glutathione + H2O = a 2-hydroxy carboxylate + glutathione + H(+). It participates in secondary metabolite metabolism; methylglyoxal degradation; (R)-lactate from methylglyoxal: step 2/2. Thiolesterase that catalyzes the hydrolysis of S-D-lactoyl-glutathione to form glutathione and D-lactic acid. This is Hydroxyacylglutathione hydrolase from Neisseria meningitidis serogroup C (strain 053442).